We begin with the raw amino-acid sequence, 360 residues long: Photosystem II protein D1 (360 aa).

3 helical membrane passes run 29–46, 118–133, and 142–156; these read YIGWFGCLMFPTLLTATS, HFLLGVASYMGREWEL, and WIFVAFSAPVAAASA. His118 contributes to the chlorophyll a binding site. Position 126 (Tyr126) interacts with pheophytin a. Residues Asp170 and Glu189 each coordinate [CaMn4O5] cluster. Residues 197-218 form a helical membrane-spanning segment; the sequence is FHMAGVAGVFGGSLFSAMHGSL. His198 is a binding site for chlorophyll a. A quinone-binding positions include His215 and 264–265; that span reads SF. Residue His215 coordinates Fe cation. Position 272 (His272) interacts with Fe cation. Residues 274 to 288 traverse the membrane as a helical segment; sequence FLALWPVVGIWLTAM. Residues His332, Glu333, Asp342, and Ala344 each contribute to the [CaMn4O5] cluster site. Positions 345-360 are excised as a propeptide; it reads SGEVLPVALTAPAVNG.

Belongs to the reaction center PufL/M/PsbA/D family. PSII is composed of 1 copy each of membrane proteins PsbA, PsbB, PsbC, PsbD, PsbE, PsbF, PsbH, PsbI, PsbJ, PsbK, PsbL, PsbM, PsbT, PsbX, PsbY, PsbZ, Psb30/Ycf12, at least 3 peripheral proteins of the oxygen-evolving complex and a large number of cofactors. It forms dimeric complexes. It depends on The D1/D2 heterodimer binds P680, chlorophylls that are the primary electron donor of PSII, and subsequent electron acceptors. It shares a non-heme iron and each subunit binds pheophytin, quinone, additional chlorophylls, carotenoids and lipids. D1 provides most of the ligands for the Mn4-Ca-O5 cluster of the oxygen-evolving complex (OEC). There is also a Cl(-1) ion associated with D1 and D2, which is required for oxygen evolution. The PSII complex binds additional chlorophylls, carotenoids and specific lipids. as a cofactor. Post-translationally, tyr-161 forms a radical intermediate that is referred to as redox-active TyrZ, YZ or Y-Z. C-terminally processed by CTPA; processing is essential to allow assembly of the oxygen-evolving complex and thus photosynthetic growth.

It is found in the plastid. It localises to the chloroplast thylakoid membrane. It carries out the reaction 2 a plastoquinone + 4 hnu + 2 H2O = 2 a plastoquinol + O2. Functionally, photosystem II (PSII) is a light-driven water:plastoquinone oxidoreductase that uses light energy to abstract electrons from H(2)O, generating O(2) and a proton gradient subsequently used for ATP formation. It consists of a core antenna complex that captures photons, and an electron transfer chain that converts photonic excitation into a charge separation. The D1/D2 (PsbA/PsbD) reaction center heterodimer binds P680, the primary electron donor of PSII as well as several subsequent electron acceptors. This Phaeodactylum tricornutum (strain CCAP 1055/1) protein is Photosystem II protein D1.